The sequence spans 406 residues: Lysine-specific demethylase 8 (406 aa).

Positions 143-152 (KAERSEEPFS) are enriched in basic and acidic residues. Residues 143 to 162 (KAERSEEPFSKKRKHDCKSE) form a disordered region. One can recognise a JmjC domain in the interval 270–406 (DQVPELKEDI…LSFSVSFWWS (137 aa)). Fe cation is bound by residues His311 and Asp313.

Fe(2+) is required as a cofactor.

Its subcellular location is the nucleus. It catalyses the reaction N(6),N(6)-dimethyl-L-lysyl(36)-[histone H3] + 2 2-oxoglutarate + 2 O2 = L-lysyl(36)-[histone H3] + 2 formaldehyde + 2 succinate + 2 CO2. Its function is as follows. Histone demethylase required for G2/M phase cell cycle progression. Specifically demethylates dimethylated 'Lys-36' (H3K36me2) of histone H3, an epigenetic repressive mark, thereby acting as a transcription activator. May play a role in the regulation of the circadian clock. The protein is Lysine-specific demethylase 8 (kdm8) of Danio rerio (Zebrafish).